Reading from the N-terminus, the 113-residue chain is Large ribosomal subunit protein uL22 (113 aa).

It belongs to the universal ribosomal protein uL22 family. Part of the 50S ribosomal subunit.

This protein binds specifically to 23S rRNA; its binding is stimulated by other ribosomal proteins, e.g. L4, L17, and L20. It is important during the early stages of 50S assembly. It makes multiple contacts with different domains of the 23S rRNA in the assembled 50S subunit and ribosome. In terms of biological role, the globular domain of the protein is located near the polypeptide exit tunnel on the outside of the subunit, while an extended beta-hairpin is found that lines the wall of the exit tunnel in the center of the 70S ribosome. The protein is Large ribosomal subunit protein uL22 of Chloroflexus aggregans (strain MD-66 / DSM 9485).